The primary structure comprises 94 residues: uncharacterized protein (94 aa).

A run of 2 helical transmembrane segments spans residues 7 to 24 (IFFIIVLVGFALFMSFNV) and 39 to 61 (AVPITLSLLFAFACGALTALLFL). A disordered region spans residues 68–94 (TRKQKREDSPTSAPTGGVSSPEHVDVP).

The protein resides in the cell membrane. This is an uncharacterized protein from Treponema pallidum (strain Nichols).